The chain runs to 421 residues: D-inositol 3-phosphate glycosyltransferase (421 aa).

1D-myo-inositol 3-phosphate is bound at residue H9. Residues 15 to 16 (QP) and G23 contribute to the UDP-N-acetyl-alpha-D-glucosamine site. 1D-myo-inositol 3-phosphate is bound by residues 20–25 (DAGGMN), K78, Y110, T134, and R154. 3 residues coordinate UDP-N-acetyl-alpha-D-glucosamine: R231, K236, and R294. Y303, Q304, and A306 together coordinate Mg(2+). UDP-N-acetyl-alpha-D-glucosamine-binding residues include E316 and E324. T330 serves as a coordination point for Mg(2+).

Belongs to the glycosyltransferase group 1 family. MshA subfamily. As to quaternary structure, homodimer.

The enzyme catalyses 1D-myo-inositol 3-phosphate + UDP-N-acetyl-alpha-D-glucosamine = 1D-myo-inositol 2-acetamido-2-deoxy-alpha-D-glucopyranoside 3-phosphate + UDP + H(+). Functionally, catalyzes the transfer of a N-acetyl-glucosamine moiety to 1D-myo-inositol 3-phosphate to produce 1D-myo-inositol 2-acetamido-2-deoxy-glucopyranoside 3-phosphate in the mycothiol biosynthesis pathway. This Corynebacterium aurimucosum (strain ATCC 700975 / DSM 44827 / CIP 107346 / CN-1) (Corynebacterium nigricans) protein is D-inositol 3-phosphate glycosyltransferase.